The sequence spans 283 residues: Calpastatin (283 aa).

Positions 1–15 (MNPTETKAIPVSQQM) are enriched in polar residues. Disordered regions lie at residues 1–186 (MNPT…SDPM) and 212–283 (NEGI…KVEK). Basic residues predominate over residues 21–30 (PNKKKHKKQA). Lysine 32 is covalently cross-linked (Glycyl lysine isopeptide (Lys-Gly) (interchain with G-Cter in SUMO2)). The span at 46–65 (VVHEKKSQEGKPKEHTEQKS) shows a compositional bias: basic and acidic residues. Lysine 50 bears the N6-acetyllysine mark. Residue serine 87 is modified to Phosphoserine. Low complexity predominate over residues 107-122 (VSAGGESVAGVAATSG). The residue at position 133 (serine 133) is a Phosphoserine. Phosphothreonine is present on threonine 135. An Inhibitory domain 1 repeat occupies 170–222 (IEEENTTYTGPEVSDPMSSTYIEELGKREVTIPPKYRELLAKNEGITGPPADS). A phosphoserine mark is found at serine 222 and serine 243. A compositionally biased stretch (basic and acidic residues) spans 249–258 (KKTEKEESTE).

Belongs to the protease inhibitor I27 (calpastatin) family.

Functionally, specific inhibition of calpain (calcium-dependent cysteine protease). Plays a key role in postmortem tenderization of meat and have been proposed to be involved in muscle protein degradation in living tissue. This is Calpastatin (CAST) from Chlorocebus aethiops (Green monkey).